Reading from the N-terminus, the 89-residue chain is Small ribosomal subunit protein uS15 (89 aa).

It belongs to the universal ribosomal protein uS15 family. In terms of assembly, part of the 30S ribosomal subunit. Forms a bridge to the 50S subunit in the 70S ribosome, contacting the 23S rRNA.

Its function is as follows. One of the primary rRNA binding proteins, it binds directly to 16S rRNA where it helps nucleate assembly of the platform of the 30S subunit by binding and bridging several RNA helices of the 16S rRNA. Forms an intersubunit bridge (bridge B4) with the 23S rRNA of the 50S subunit in the ribosome. This Pseudomonas fluorescens (strain ATCC BAA-477 / NRRL B-23932 / Pf-5) protein is Small ribosomal subunit protein uS15.